We begin with the raw amino-acid sequence, 573 residues long: (R)-mandelonitrile lyase 3 (573 aa).

The N-terminal stretch at 1–27 is a signal peptide; the sequence is MVKSTMSAVLLVLHIFVLHLQYSEVQS. The N-linked (GlcNAc...) asparagine glycan is linked to Asn-30. Position 63-64 (63-64) interacts with FAD; the sequence is TA. Asn-75 carries N-linked (GlcNAc...) asparagine glycosylation. Residues 82–83, Val-129, Thr-133, and 137–140 contribute to the FAD site; these read ER and NAGV. Asn-145, Asn-150, Asn-162, and Asn-218 each carry an N-linked (GlcNAc...) asparagine glycan. Val-244 is a binding site for FAD. N-linked (GlcNAc...) asparagine glycans are attached at residues Asn-252, Asn-267, and Asn-309. Residue Cys-356 coordinates substrate. Residues Asn-380, Asn-402, Asn-420, and Asn-467 are each glycosylated (N-linked (GlcNAc...) asparagine). Cysteines 427 and 478 form a disulfide. Tyr-485 provides a ligand contact to substrate. Residues 486–487 and Gly-515 each bind FAD; that span reads WH. His-487 (proton donor) is an active-site residue. The active-site Proton acceptor is the His-525. 526 to 527 is a binding site for FAD; the sequence is PQ.

This sequence belongs to the GMC oxidoreductase family. Monomer. Requires FAD as cofactor.

Its subcellular location is the vacuole. The protein localises to the aleurone grain. The enzyme catalyses (R)-mandelonitrile = benzaldehyde + hydrogen cyanide. Its function is as follows. Involved in cyanogenesis, the release of HCN from injured tissues. Catalyzes the stereospecific addition of HCN to a variety of aldehydes in vitro. It is a major seed constituent, and could have the additional role of a storage form for reduced nitrogen. The protein is (R)-mandelonitrile lyase 3 (MDL3) of Prunus serotina (Black cherry).